Consider the following 500-residue polypeptide: 5-taurinomethyluridine-[tRNA] synthase subunit GTPB3, mitochondrial (500 aa).

Residues methionine 1–proline 73 constitute a mitochondrion transit peptide. 5,10-methylenetetrahydrofolate contacts are provided by arginine 53, glutamate 111, and lysine 151. One can recognise a TrmE-type G domain in the interval glycine 248–lysine 422. Residues glycine 255 to serine 262, glycine 281 to aspartate 285, aspartate 302 to glycine 305, and asparagine 373 to aspartate 376 each bind GTP. Residue asparagine 258 participates in K(+) binding. Positions 262 and 283 each coordinate Mg(2+). Lysine 500 provides a ligand contact to 5,10-methylenetetrahydrofolate.

It belongs to the TRAFAC class TrmE-Era-EngA-EngB-Septin-like GTPase superfamily. TrmE GTPase family. K(+) is required as a cofactor.

It localises to the mitochondrion. The enzyme catalyses GTP + H2O = GDP + phosphate + H(+). Functionally, GTPase component of the GTPBP3-MTO1 complex that catalyzes the 5-taurinomethyluridine (taum(5)U) modification at the 34th wobble position (U34) of mitochondrial tRNAs (mt-tRNAs), which plays a role in mt-tRNA decoding and mitochondrial translation. Taum(5)U formation on mammalian mt-tRNA requires the presence of both GTPBP3-mediated GTPase activity and MTO1 catalytic activity. The polypeptide is 5-taurinomethyluridine-[tRNA] synthase subunit GTPB3, mitochondrial (gtpbp3) (Danio rerio (Zebrafish)).